A 424-amino-acid polypeptide reads, in one-letter code: CinA-like protein (424 aa).

It belongs to the CinA family.

This Shewanella amazonensis (strain ATCC BAA-1098 / SB2B) protein is CinA-like protein.